The chain runs to 365 residues: UDP-N-acetylglucosamine--N-acetylmuramyl-(pentapeptide) pyrophosphoryl-undecaprenol N-acetylglucosamine transferase (365 aa).

Residues T10–G12, N124, R161, S195, I248, and Q292 contribute to the UDP-N-acetyl-alpha-D-glucosamine site.

Belongs to the glycosyltransferase 28 family. MurG subfamily.

It is found in the cell membrane. The enzyme catalyses di-trans,octa-cis-undecaprenyl diphospho-N-acetyl-alpha-D-muramoyl-L-alanyl-D-glutamyl-meso-2,6-diaminopimeloyl-D-alanyl-D-alanine + UDP-N-acetyl-alpha-D-glucosamine = di-trans,octa-cis-undecaprenyl diphospho-[N-acetyl-alpha-D-glucosaminyl-(1-&gt;4)]-N-acetyl-alpha-D-muramoyl-L-alanyl-D-glutamyl-meso-2,6-diaminopimeloyl-D-alanyl-D-alanine + UDP + H(+). Its pathway is cell wall biogenesis; peptidoglycan biosynthesis. In terms of biological role, cell wall formation. Catalyzes the transfer of a GlcNAc subunit on undecaprenyl-pyrophosphoryl-MurNAc-pentapeptide (lipid intermediate I) to form undecaprenyl-pyrophosphoryl-MurNAc-(pentapeptide)GlcNAc (lipid intermediate II). The polypeptide is UDP-N-acetylglucosamine--N-acetylmuramyl-(pentapeptide) pyrophosphoryl-undecaprenol N-acetylglucosamine transferase (Nocardioides sp. (strain ATCC BAA-499 / JS614)).